The primary structure comprises 210 residues: Probable GTP-binding protein EngB (210 aa).

One can recognise an EngB-type G domain in the interval 25-199; that stretch reads RGIEVAFAGR…RQKLDSWFSE (175 aa). GTP is bound by residues 33 to 40, 60 to 64, 78 to 81, 145 to 148, and 178 to 180; these read GRSNAGKS, GRTQL, DLPG, TKAD, and FSS. The Mg(2+) site is built by serine 40 and threonine 62.

Belongs to the TRAFAC class TrmE-Era-EngA-EngB-Septin-like GTPase superfamily. EngB GTPase family. Mg(2+) is required as a cofactor.

Functionally, necessary for normal cell division and for the maintenance of normal septation. The protein is Probable GTP-binding protein EngB of Salmonella paratyphi B (strain ATCC BAA-1250 / SPB7).